The chain runs to 59 residues: Photosystem II reaction center protein K (59 aa).

A propeptide spanning residues 1-22 (MILYSHLSTLIDIDLSNNIFLA) is cleaved from the precursor. Residues 30–50 (IFDPLVDVMPVIPVFFLLLAF) traverse the membrane as a helical segment.

Belongs to the PsbK family. PSII is composed of 1 copy each of membrane proteins PsbA, PsbB, PsbC, PsbD, PsbE, PsbF, PsbH, PsbI, PsbJ, PsbK, PsbL, PsbM, PsbT, PsbX, PsbY, PsbZ, Psb30/Ycf12, at least 3 peripheral proteins of the oxygen-evolving complex and a large number of cofactors. It forms dimeric complexes.

The protein localises to the plastid. The protein resides in the chloroplast thylakoid membrane. Functionally, one of the components of the core complex of photosystem II (PSII). PSII is a light-driven water:plastoquinone oxidoreductase that uses light energy to abstract electrons from H(2)O, generating O(2) and a proton gradient subsequently used for ATP formation. It consists of a core antenna complex that captures photons, and an electron transfer chain that converts photonic excitation into a charge separation. This chain is Photosystem II reaction center protein K, found in Chara vulgaris (Common stonewort).